The primary structure comprises 205 residues: Small ribosomal subunit protein uS4 (205 aa).

A compositionally biased stretch (basic and acidic residues) spans 1-16; that stretch reads MSKRESSKYKIDRRMG. A disordered region spans residues 1-46; sequence MSKRESSKYKIDRRMGENIWGRPKSPVNRREYGPGQHGQRRKGKLS. The 64-residue stretch at 94 to 157 folds into the S4 RNA-binding domain; sequence SRLDAIVYRA…KQLVIVLEAV (64 aa).

It belongs to the universal ribosomal protein uS4 family. Part of the 30S ribosomal subunit. Contacts protein S5. The interaction surface between S4 and S5 is involved in control of translational fidelity.

In terms of biological role, one of the primary rRNA binding proteins, it binds directly to 16S rRNA where it nucleates assembly of the body of the 30S subunit. Functionally, with S5 and S12 plays an important role in translational accuracy. The polypeptide is Small ribosomal subunit protein uS4 (Rhizobium johnstonii (strain DSM 114642 / LMG 32736 / 3841) (Rhizobium leguminosarum bv. viciae)).